Reading from the N-terminus, the 175-residue chain is Ribosome maturation factor RimM (175 aa).

Residues 97–170 enclose the PRC barrel domain; the sequence is NGQYYWTDVL…YLYVDWQMAW (74 aa).

It belongs to the RimM family. Binds ribosomal protein uS19.

Its subcellular location is the cytoplasm. In terms of biological role, an accessory protein needed during the final step in the assembly of 30S ribosomal subunit, possibly for assembly of the head region. Essential for efficient processing of 16S rRNA. May be needed both before and after RbfA during the maturation of 16S rRNA. It has affinity for free ribosomal 30S subunits but not for 70S ribosomes. This is Ribosome maturation factor RimM from Dichelobacter nodosus (strain VCS1703A).